A 212-amino-acid polypeptide reads, in one-letter code: Pyridoxine/pyridoxamine 5'-phosphate oxidase (212 aa).

Substrate is bound by residues 8–11 (RKNY) and lysine 66. FMN contacts are provided by residues 61-66 (RIVLIK), 76-77 (FT), arginine 82, lysine 83, and glutamine 105. The substrate site is built by tyrosine 123, arginine 127, and serine 131. Residues 140–141 (QS) and tryptophan 184 each bind FMN. 190–192 (RLH) provides a ligand contact to substrate. Arginine 194 serves as a coordination point for FMN.

This sequence belongs to the pyridoxamine 5'-phosphate oxidase family. Homodimer. Requires FMN as cofactor.

The catalysed reaction is pyridoxamine 5'-phosphate + O2 + H2O = pyridoxal 5'-phosphate + H2O2 + NH4(+). The enzyme catalyses pyridoxine 5'-phosphate + O2 = pyridoxal 5'-phosphate + H2O2. It participates in cofactor metabolism; pyridoxal 5'-phosphate salvage; pyridoxal 5'-phosphate from pyridoxamine 5'-phosphate: step 1/1. Its pathway is cofactor metabolism; pyridoxal 5'-phosphate salvage; pyridoxal 5'-phosphate from pyridoxine 5'-phosphate: step 1/1. Catalyzes the oxidation of either pyridoxine 5'-phosphate (PNP) or pyridoxamine 5'-phosphate (PMP) into pyridoxal 5'-phosphate (PLP). The chain is Pyridoxine/pyridoxamine 5'-phosphate oxidase from Paraburkholderia phymatum (strain DSM 17167 / CIP 108236 / LMG 21445 / STM815) (Burkholderia phymatum).